The primary structure comprises 304 residues: MARTHDDKWDLASSVGATATIVAAGRAMASRDPRGLIDDPFAEPLVRAVGVDFFIKMMDGEFDLSVLQNVSSAKAQAMVDGMAVRTKYFDDYFGDAIKSGIRQAVILASGLDARAYRLPWPADTVVYELDQPQVIEFKTNVLADLGAEPRATRRAIPIDLRGDWPVALRAAGLDTTAPTAWLAEGLLIYLPPEAQDRLFDNITALSAPGSTVATEFVPGIVDFDVDRARQMSGPFRDHGLDIDMSSLVYTGARNHVVDYLRAKGWDAEGVTRSKLFERNGMAVPAPSDDDPLGEIIFISAALTG.

S-adenosyl-L-methionine-binding positions include D130 and 159-160; that span reads DL.

This sequence belongs to the UPF0677 family.

In terms of biological role, exhibits S-adenosyl-L-methionine-dependent methyltransferase activity. The polypeptide is Putative S-adenosyl-L-methionine-dependent methyltransferase MUL_0816 (Mycobacterium ulcerans (strain Agy99)).